The chain runs to 235 residues: Large ribosomal subunit protein uL3 (235 aa).

At glutamine 151 the chain carries N5-methylglutamine.

Belongs to the universal ribosomal protein uL3 family. Part of the 50S ribosomal subunit. Forms a cluster with proteins L14 and L19. In terms of processing, methylated by PrmB.

Its function is as follows. One of the primary rRNA binding proteins, it binds directly near the 3'-end of the 23S rRNA, where it nucleates assembly of the 50S subunit. In Rhodospirillum rubrum (strain ATCC 11170 / ATH 1.1.1 / DSM 467 / LMG 4362 / NCIMB 8255 / S1), this protein is Large ribosomal subunit protein uL3.